The chain runs to 426 residues: Glutamate-1-semialdehyde 2,1-aminomutase (426 aa).

Lys265 carries the post-translational modification N6-(pyridoxal phosphate)lysine.

Belongs to the class-III pyridoxal-phosphate-dependent aminotransferase family. HemL subfamily. In terms of assembly, homodimer. The cofactor is pyridoxal 5'-phosphate.

It is found in the cytoplasm. The catalysed reaction is (S)-4-amino-5-oxopentanoate = 5-aminolevulinate. Its pathway is porphyrin-containing compound metabolism; protoporphyrin-IX biosynthesis; 5-aminolevulinate from L-glutamyl-tRNA(Glu): step 2/2. The sequence is that of Glutamate-1-semialdehyde 2,1-aminomutase from Salmonella agona (strain SL483).